An 853-amino-acid chain; its full sequence is Cytochrome P450 monooxygenase mpaDE' (853 aa).

At 1-6 (MESLSL) the chain is on the lumenal side. A helical transmembrane segment spans residues 7-29 (TWITAIAVVLYLVQRYVRSYWRL). Residues 30–853 (KDIPGPVLAK…DIENAIEGQK (824 aa)) lie on the Cytoplasmic side of the membrane. C449 is a heme binding site.

It belongs to the cytochrome P450 family. Requires heme as cofactor.

It is found in the endoplasmic reticulum membrane. The catalysed reaction is 5-methylorsellinate + reduced [NADPH--hemoprotein reductase] + O2 = 4,6-dihydroxy-2-(hydroxymethyl)-3-methylbenzoate + oxidized [NADPH--hemoprotein reductase] + H2O + H(+). The enzyme catalyses 4,6-dihydroxy-2-(hydroxymethyl)-3-methylbenzoate + H(+) = 5,7-dihydroxy-4-methylphthalide + H2O. The protein operates within secondary metabolite biosynthesis; terpenoid biosynthesis. Functionally, cytochrome P450 monooxygenase; part of the gene cluster that mediates the biosynthesis of mycophenolic acid (MPA), the first isolated antibiotic natural product in the world obtained from a culture of Penicillium brevicompactum in 1893. MpaDE' is an endoplasmic reticulum-bound enzyme that catalyzes the conversion of 5-methylorsellinic acid (5MOA) into the phthalide compound 5,7-dihydroxy-4,6-dimethylphthalide (DHMP). MpaDE' first catalyzes hydroxylation of 5-MOA to 4,6-dihydroxy-2-(hydroxymethyl)-3-methylbenzoic acid (DHMB), and then acts as a lactone synthase that catalyzes the ring closure to convert DHMB into DHMP. The first step of the pathway is the synthesis of 5-methylorsellinic acid (5MOA) by the cytosolic polyketide synthase mpaC. 5MOA is then converted to the phthalide compound 5,7-dihydroxy-4,6-dimethylphthalide (DHMP) by the endoplasmic reticulum-bound cytochrome P450 monooxygenase mpaDE. MpaDE first catalyzes hydroxylation of 5-MOA to 4,6-dihydroxy-2-(hydroxymethyl)-3-methylbenzoic acid (DHMB). MpaDE then acts as a lactone synthase that catalyzes the ring closure to convert DHMB into DHMP. The next step is the prenylation of DHMP by the Golgi apparatus-associated prenyltransferase mpaA to yield farnesyl-DHMP (FDHMP). The ER-bound oxygenase mpaB then mediates the oxidative cleavage the C19-C20 double bond in FDHMP to yield FDHMP-3C via a mycophenolic aldehyde intermediate. The O-methyltransferase mpaG catalyzes the methylation of FDHMP-3C to yield MFDHMP-3C. After the cytosolic methylation of FDHMP-3C, MFDHMP-3C enters into peroxisomes probably via free diffusion due to its low molecular weight. Upon a peroxisomal CoA ligation reaction, catalyzed by a beta-oxidation component enzyme acyl-CoA ligase ACL891, MFDHMP-3C-CoA would then be restricted to peroxisomes for the following beta-oxidation pathway steps. The peroxisomal beta-oxidation machinery than converts MFDHMP-3C-CoA into MPA_CoA, via a beta-oxidation chain-shortening process. Finally mpaH acts as a peroxisomal acyl-CoA hydrolase with high substrate specificity toward MPA-CoA to release the final product MPA. The polypeptide is Cytochrome P450 monooxygenase mpaDE' (Penicillium brevicompactum).